We begin with the raw amino-acid sequence, 272 residues long: Tryptophan synthase alpha chain (272 aa).

Catalysis depends on proton acceptor residues Glu49 and Glu60.

The protein belongs to the TrpA family. As to quaternary structure, tetramer of two alpha and two beta chains.

It carries out the reaction (1S,2R)-1-C-(indol-3-yl)glycerol 3-phosphate + L-serine = D-glyceraldehyde 3-phosphate + L-tryptophan + H2O. It participates in amino-acid biosynthesis; L-tryptophan biosynthesis; L-tryptophan from chorismate: step 5/5. Its function is as follows. The alpha subunit is responsible for the aldol cleavage of indoleglycerol phosphate to indole and glyceraldehyde 3-phosphate. The sequence is that of Tryptophan synthase alpha chain from Legionella pneumophila (strain Lens).